We begin with the raw amino-acid sequence, 266 residues long: MNAPENIFLPDVQAAADTRRLAIQSVGVKGLRYPLQLENAAGELTSTVATFAMSVGLPPEVKGTHMSRFVELLEARTGPLTQVGLLRMMADMLLRLDASSGRIELAFPYFIRKMAPVSGVESLLDYDATLIVDQRAWESATLTLRVVAPVTSLCPCSKKISDYGAHNQRSHITLEARLRSPMSIEDLVRIAEEEASCEVFGLLKRPDEKWVTERAYDNPKFVEDLVRDIALRLMNEPRIAEWKVASENFESIHNHSAYAELYGCNE.

Belongs to the GTP cyclohydrolase IV family.

The enzyme catalyses GTP + H2O = 7,8-dihydroneopterin 3'-triphosphate + formate + H(+). It functions in the pathway cofactor biosynthesis; 7,8-dihydroneopterin triphosphate biosynthesis; 7,8-dihydroneopterin triphosphate from GTP: step 1/1. In terms of biological role, converts GTP to 7,8-dihydroneopterin triphosphate. The chain is GTP cyclohydrolase FolE2 1 from Dechloromonas aromatica (strain RCB).